Reading from the N-terminus, the 167-residue chain is Multifunctional Ser/Thr-tRNA deacylase ProXp-y (167 aa).

It localises to the cytoplasm. The catalysed reaction is L-seryl-tRNA(Lys) + H2O = tRNA(Lys) + L-serine. It catalyses the reaction L-threonyl-tRNA(Lys) + H2O = tRNA(Lys) + L-threonine. It carries out the reaction L-homoseryl-tRNA(Lys) + H2O = tRNA(Lys) + L-homoserine + H(+). The enzyme catalyses L-seryl-tRNA(Ala) + H2O = tRNA(Ala) + L-serine. The catalysed reaction is L-homoseryl-tRNA(Ser) + H2O = tRNA(Ser) + L-homoserine + H(+). It catalyses the reaction L-seryl-tRNA(Thr) + H2O = tRNA(Thr) + L-serine. It carries out the reaction L-threonyl-tRNA(Ile) + H2O = tRNA(Ile) + L-threonine. The enzyme catalyses L-threonyl-tRNA(Val) + H2O = tRNA(Val) + L-threonine. The catalysed reaction is L-threonyl-tRNA(Ser) + H2O = tRNA(Ser) + L-threonine. In terms of biological role, an aminoacyl-tRNA editing enzyme that deacylates Ser-tRNA and/or Thr-tRNA mischarged by lysyl-tRNA synthetase (LysRS), threonyl-tRNA synthetase (ThrRS), seryl-tRNA synthetase (SerRS), alanyl-tRNA synthetase (AlaRS), valyl-tRNA synthetase (ValRS) and isoleucyl-tRNA synthetase (IleRS) in vitro. Also deacylates mischarged Hse-tRNA(Lys) and Hse-tRNA(Ser), and cognate Ser-tRNA(Ser) and Thr-tRNA(Thr) in vitro. The presence of cognate ThrRS abolishes the Thr-tRNA(Thr) deacylase activity, hence this activity is not applicable physiologically. Not able to remove the amino acid moiety from cognate Val-tRNA(Val), Ile-tRNA(Ile), Lys-tRNA(Lys), Ala-tRNA(Ala) or Pro-tRNA(Pro), or from incorrectly charged Ala-tRNA(Pro), Cys-tRNA(Pro) or Leu-tRNA(Pro) in vitro. May be required in vivo to prevent mistranslation and to maintain growth when the error prone stress-inducible lysyl-tRNA synthetase (LysU) is expressed under environmental pressure. This Escherichia coli O157:H7 protein is Multifunctional Ser/Thr-tRNA deacylase ProXp-y.